The chain runs to 400 residues: Laminin subunit B (400 aa).

Laminin EGF-like domains are found at residues 1-5 (EGCKP), 6-53 (CECD…GCKS), and 54-100 (CTCN…QCIP). 8 disulfide bridges follow: Cys6–Cys18, Cys8–Cys25, Cys27–Cys36, Cys39–Cys51, Cys54–Cys66, Cys56–Cys73, Cys75–Cys84, and Cys87–Cys98. The domain II and I stretch occupies residues 101 to 400 (CGECFDNWDK…AEAKNNAHEA (300 aa)). Positions 140 to 235 (KEFEELEQVL…RENALEIQEQ (96 aa)) form a coiled coil. N-linked (GlcNAc...) asparagine glycosylation is found at Asn160, Asn175, Asn216, Asn266, Asn283, Asn310, and Asn356. The stretch at 353–400 (EAKNTSRKAEELIKSKYRSTSSTLSELENSNKQCKQATAEAKNNAHEA) forms a coiled coil. Positions 369–400 (YRSTSSTLSELENSNKQCKQATAEAKNNAHEA) are disordered. Low complexity predominate over residues 371-383 (STSSTLSELENSN).

As to quaternary structure, laminin is a complex glycoprotein, consisting of three different polypeptide chains (alpha, beta, gamma), which are bound to each other by disulfide bonds into a cross-shaped molecule comprising one long and three short arms with globules at each end. Individual glial and muscle cells.

It localises to the secreted. The protein localises to the extracellular space. The protein resides in the extracellular matrix. In terms of biological role, binding to cells via a high affinity receptor, laminin is thought to mediate the attachment, migration and organization of cells into tissues during embryonic development by interacting with other extracellular matrix components. The sequence is that of Laminin subunit B from Hirudo medicinalis (Medicinal leech).